Here is a 935-residue protein sequence, read N- to C-terminus: Coatomer subunit gamma (935 aa).

5 HEAT repeats span residues 258 to 296 (PQLF…RNSR), 337 to 372 (PEKI…TGTS), 373 to 410 (KNIS…NFPQ), 412 to 449 (WKSI…FVPQ), and 524 to 562 (PTLY…ARNK). The segment at 630 to 656 (KSETTLDTTPEAESVPEKRADANSFAG) is disordered. A Phosphothreonine modification is found at Thr-638. Position 643 is a phosphoserine (Ser-643). A Glycyl lysine isopeptide (Lys-Gly) (interchain with G-Cter in ubiquitin) cross-link involves residue Lys-647. Ser-653 carries the phosphoserine modification.

The protein belongs to the COPG family. Oligomeric complex that consists of at least the alpha, beta, beta', gamma, delta, epsilon and zeta subunits. Interacts (via C-terminus) with GEA1 (via N-terminal region) and KEI1 (via C-terminal region).

It is found in the cytoplasm. The protein localises to the golgi apparatus membrane. It localises to the cytoplasmic vesicle. Its subcellular location is the COPI-coated vesicle membrane. The protein resides in the endosome. Functionally, the coatomer is a cytosolic protein complex that binds to dilysine motifs and reversibly associates with Golgi non-clathrin-coated vesicles, which further mediate biosynthetic protein transport from the ER, via the Golgi up to the trans Golgi network. Coatomer complex is required for budding from Golgi membranes, and is essential for the retrograde Golgi-to-ER transport of dilysine-tagged proteins. This chain is Coatomer subunit gamma (SEC21), found in Saccharomyces cerevisiae (strain ATCC 204508 / S288c) (Baker's yeast).